The sequence spans 307 residues: Serine/threonine-protein phosphatase 4 catalytic subunit B (307 aa).

Mn(2+) contacts are provided by D54, H56, D82, and N114. H115 acts as the Proton donor in catalysis. Residues H164 and H238 each contribute to the Mn(2+) site. Leucine methyl ester is present on L307.

Belongs to the PPP phosphatase family. PP-4 (PP-X) subfamily. Serine/threonine-protein phosphatase 4 (PP4) occurs in different assemblies of the catalytic and one or more regulatory subunits. Mn(2+) serves as cofactor.

It localises to the cytoplasm. Its subcellular location is the cytoskeleton. The protein resides in the microtubule organizing center. It is found in the centrosome. It carries out the reaction O-phospho-L-seryl-[protein] + H2O = L-seryl-[protein] + phosphate. It catalyses the reaction O-phospho-L-threonyl-[protein] + H2O = L-threonyl-[protein] + phosphate. Its function is as follows. Protein phosphatase that regulates many processes such as microtubule organization at centrosomes. This Danio rerio (Zebrafish) protein is Serine/threonine-protein phosphatase 4 catalytic subunit B (ppp4cb).